Consider the following 490-residue polypeptide: Probable cytosol aminopeptidase (490 aa).

Residues K262 and D267 each contribute to the Mn(2+) site. Residue K274 is part of the active site. Mn(2+)-binding residues include D285, D344, and E346. R348 is a catalytic residue.

It belongs to the peptidase M17 family. Requires Mn(2+) as cofactor.

The protein resides in the cytoplasm. It catalyses the reaction Release of an N-terminal amino acid, Xaa-|-Yaa-, in which Xaa is preferably Leu, but may be other amino acids including Pro although not Arg or Lys, and Yaa may be Pro. Amino acid amides and methyl esters are also readily hydrolyzed, but rates on arylamides are exceedingly low.. The catalysed reaction is Release of an N-terminal amino acid, preferentially leucine, but not glutamic or aspartic acids.. Its function is as follows. Presumably involved in the processing and regular turnover of intracellular proteins. Catalyzes the removal of unsubstituted N-terminal amino acids from various peptides. The chain is Probable cytosol aminopeptidase from Xanthomonas axonopodis pv. citri (strain 306).